We begin with the raw amino-acid sequence, 150 residues long: CCAAT/enhancer-binding protein gamma (150 aa).

K3 participates in a covalent cross-link: Glycyl lysine isopeptide (Lys-Gly) (interchain with G-Cter in SUMO2). The segment at 27 to 94 (GLQQVPQLVP…QKAQDTLQRV (68 aa)) is disordered. The segment covering 28–37 (LQQVPQLVPA) has biased composition (low complexity). The segment covering 56–72 (SPMDRNSDEYRQRRERN) has biased composition (basic and acidic residues). One can recognise a bZIP domain in the interval 62-125 (SDEYRQRRER…SVLKDLFLEH (64 aa)). The interval 66 to 93 (RQRRERNNMAVKKSRLKSKQKAQDTLQR) is basic motif. The segment at 97-118 (LKEENERLEAKIKLLTKELSVL) is leucine-zipper.

It belongs to the bZIP family. C/EBP subfamily. In terms of assembly, binds DNA as a dimer and can form stable heterodimers with CEBPA and CEBPB. Interacts with ZNF638; this interaction increases transcriptional activation.

Its subcellular location is the nucleus. In terms of biological role, transcription factor that binds to the promoter and the enhancer regions of target genes. Binds to the promoter and the enhancer of the alpha-1-fetoprotein gene. Binds to the enhancer element PRE-I (positive regulatory element-I) of the IL-4 gene. Binds to the promoter and the enhancer of the immunoglobulin heavy chain. Binds to GPE1, a cis-acting element in the G-CSF gene promoter. This Rattus norvegicus (Rat) protein is CCAAT/enhancer-binding protein gamma (Cebpg).